The primary structure comprises 760 residues: Mitochondrial intermediate peptidase (760 aa).

The transit peptide at 1-19 directs the protein to the mitochondrion; that stretch reads MLARSVRTLVVSPKTVFRF. His543 contacts Zn(2+). Glu544 is an active-site residue. His547 contacts Zn(2+).

Belongs to the peptidase M3 family. Requires Zn(2+) as cofactor.

The protein localises to the mitochondrion matrix. It carries out the reaction Release of an N-terminal octapeptide as second stage of processing of some proteins imported into the mitochondrion.. Functionally, cleaves proteins, imported into the mitochondrion, to their mature size. While most mitochondrial precursor proteins are processed to the mature form in one step by mitochondrial processing peptidase (MPP), the sequential cleavage by MIP of an octapeptide after initial processing by MPP is a required step for a subgroup of nuclear-encoded precursor proteins destined for the matrix or the inner membrane. This is Mitochondrial intermediate peptidase (OCT1) from Leucoagaricus gongylophorus (Leaf-cutting ant fungus).